The sequence spans 95 residues: Small ribosomal subunit protein bS6 (95 aa).

Belongs to the bacterial ribosomal protein bS6 family.

Binds together with bS18 to 16S ribosomal RNA. This chain is Small ribosomal subunit protein bS6, found in Streptococcus agalactiae serotype Ia (strain ATCC 27591 / A909 / CDC SS700).